A 191-amino-acid chain; its full sequence is Fe/S biogenesis protein NfuA (191 aa).

2 residues coordinate [4Fe-4S] cluster: C149 and C152.

The protein belongs to the NfuA family. Homodimer. It depends on [4Fe-4S] cluster as a cofactor.

In terms of biological role, involved in iron-sulfur cluster biogenesis. Binds a 4Fe-4S cluster, can transfer this cluster to apoproteins, and thereby intervenes in the maturation of Fe/S proteins. Could also act as a scaffold/chaperone for damaged Fe/S proteins. This Serratia proteamaculans (strain 568) protein is Fe/S biogenesis protein NfuA.